A 766-amino-acid polypeptide reads, in one-letter code: 5-methyltetrahydropteroyltriglutamate--homocysteine methyltransferase (766 aa).

Residues 16–19 (RELK) and Lys119 contribute to the 5-methyltetrahydropteroyltri-L-glutamate site. Residues 440-442 (IGS) and Glu493 each bind L-homocysteine. Residues 440–442 (IGS) and Glu493 each bind L-methionine. Residues 524-525 (RC) and Trp570 contribute to the 5-methyltetrahydropteroyltri-L-glutamate site. Asp608 is a binding site for L-homocysteine. Asp608 is an L-methionine binding site. Glu614 lines the 5-methyltetrahydropteroyltri-L-glutamate pocket. Zn(2+) contacts are provided by His650, Cys652, and Glu674. His703 serves as the catalytic Proton donor. Cys735 serves as a coordination point for Zn(2+).

This sequence belongs to the vitamin-B12 independent methionine synthase family. Zn(2+) is required as a cofactor.

It carries out the reaction 5-methyltetrahydropteroyltri-L-glutamate + L-homocysteine = tetrahydropteroyltri-L-glutamate + L-methionine. The protein operates within amino-acid biosynthesis; L-methionine biosynthesis via de novo pathway; L-methionine from L-homocysteine (MetE route): step 1/1. Functionally, catalyzes the transfer of a methyl group from 5-methyltetrahydrofolate to homocysteine resulting in methionine formation. This is 5-methyltetrahydropteroyltriglutamate--homocysteine methyltransferase from Pseudomonas aeruginosa (strain UCBPP-PA14).